The following is a 107-amino-acid chain: Phosphoribosyl-ATP pyrophosphatase (107 aa).

This sequence belongs to the PRA-PH family.

It localises to the cytoplasm. The catalysed reaction is 1-(5-phospho-beta-D-ribosyl)-ATP + H2O = 1-(5-phospho-beta-D-ribosyl)-5'-AMP + diphosphate + H(+). The protein operates within amino-acid biosynthesis; L-histidine biosynthesis; L-histidine from 5-phospho-alpha-D-ribose 1-diphosphate: step 2/9. This chain is Phosphoribosyl-ATP pyrophosphatase, found in Bacillus cereus (strain ZK / E33L).